Reading from the N-terminus, the 306-residue chain is MNQIWSTGPPNFYFNSEWKENKRNDRTIEDSLRELDGLIHSLERTHIEVQTNPKLKNDVTALNDINKKENKEEITHENYTHQINSIPLTSSNLNRHFSFSRDYNQSDNSNNNYYREYLSKPRYLQQSTKEQTFNEINKRKSAAIIPPWLNIPENSRFFVIKSSSLKHVKRSFYNGIWSSTHFGNKRLSEAYKKLNSGAKVFLFFSINTSGRFCGVAEMVSDLKMDLDTSIWEDEQKYGKAFKVRWVIVRDINNRSLKRFLIPSNEMKPITHSRDTQEIPYSIGISIINLFKTQDSDIFSFLDETYE.

Positions 155–290 (SRFFVIKSSS…SIGISIINLF (136 aa)) constitute a YTH domain. Residues 161 to 163 (KSS), Asn207, and Trp231 each bind RNA.

In terms of biological role, RNA-binding protein that acts as a post-transcriptional regulator of phosphate metabolism by binding to the 3'-UTR region of PHO4 mRNA, decreasing its stability. Acts by recognizing and binding N6-methyladenosine (m6A)-containing RNAs, a modification present at internal sites of mRNAs and some non-coding RNAs. The polypeptide is Methylated RNA-binding protein 1 (Saccharomyces cerevisiae (strain ATCC 204508 / S288c) (Baker's yeast)).